The chain runs to 207 residues: uncharacterized protein (207 aa).

Residues R80, E88, and R148 contribute to the active site.

It belongs to the thermonuclease family.

This is an uncharacterized protein from Methanocaldococcus jannaschii (strain ATCC 43067 / DSM 2661 / JAL-1 / JCM 10045 / NBRC 100440) (Methanococcus jannaschii).